A 165-amino-acid chain; its full sequence is Anaerobic nitrite reductase GLB1 (165 aa).

The region spanning 12–162 (VFGEEQEALV…LVAAIKREMK (151 aa)) is the Globin domain. The Homodimerization motif lies at 45-49 (EIAPS). Heme b contacts are provided by S55, K69, H73, R103, T107, and H108. The Homodimerization signature appears at 115 to 127 (DGHFEVTGFALLE).

This sequence belongs to the plant globin family. As to quaternary structure, homodimer. The cofactor is heme b. In terms of tissue distribution, in embryonic organs and at low levels in vegetative organs.

The protein localises to the cytoplasm. The protein resides in the nucleus. It carries out the reaction Fe(III)-heme b-[protein] + nitric oxide + H2O = Fe(II)-heme b-[protein] + nitrite + 2 H(+). Phytoglobin that reduces nitrite to nitric oxide (NO) under anoxic conditions (e.g. during flooding or in waterlogged soil). May not function as an oxygen storage or transport protein. Has an unusually high affinity for O(2) through an hexacoordinate heme iron because of a very low dissociation constant. This Zea mays (Maize) protein is Anaerobic nitrite reductase GLB1 (HB).